A 410-amino-acid polypeptide reads, in one-letter code: WD repeat and FYVE domain-containing protein 1 (410 aa).

6 WD repeats span residues 22 to 61, 66 to 105, 112 to 150, 153 to 192, 197 to 236, and 240 to 279; these read GHQD…QYWP, TMAS…NKMN, AHQN…NMLG, FFTS…CSVI, GHEG…GRTL, and GHHD…EEAP. The FYVE-type zinc finger occupies 281 to 352; it reads WLESDSCQKC…VCDSCYDSIK (72 aa). Residues Cys-287, Cys-290, Cys-314, Cys-317, Cys-322, Cys-325, Cys-344, and Cys-347 each coordinate Zn(2+). A WD 7 repeat occupies 364 to 403; that stretch reads EGKHNISHMSMDIARGLMVTCGTDRIVKIWDMTPVVGCSL. A Phosphoserine modification is found at Ser-408.

Binds PtdIns3P in vitro with high specificity over other phosphoinositides. Interacts (via WD repeat 2) with tyrosine-phosphorylated TLR3 (via TIR domain) in response to poly(I:C). Interacts with TICAM1 in response to poly(I:C). Interacts with TLR4 in response to LPS.

Its subcellular location is the early endosome. Functionally, positively regulates TLR3- and TLR4-mediated signaling pathways by bridging the interaction between TLR3 or TLR4 and TICAM1. Promotes TLR3/4 ligand-induced activation of transcription factors IRF3 and NF-kappa-B, as well as the production of IFN-beta and inflammatory cytokines. The polypeptide is WD repeat and FYVE domain-containing protein 1 (WDFY1) (Homo sapiens (Human)).